A 288-amino-acid polypeptide reads, in one-letter code: Protoheme IX farnesyltransferase (288 aa).

9 consecutive transmembrane segments (helical) span residues 16 to 36 (VWSLLVFVGAIGAVIAIPYFN), 37 to 57 (LHYISLIVLATIAVMLGSMGA), 88 to 108 (INGLLFGLVLMFLSIAILAAF), 111 to 131 (LYAALFMGIGLFDNVFIYSYL), 138 to 158 (WNIILGGFSGGFPVVIGWYTV), 162 to 182 (FSILPWFLFLLVVVWIPIHVW), 210 to 230 (AICISSAAIILFAFSIIPAFF), 236 to 256 (VYMILASAIAVPMIFYSIVFV), and 265 to 285 (LKLFIYSSPYLAIIFVLVLIF).

The protein belongs to the UbiA prenyltransferase family. Protoheme IX farnesyltransferase subfamily.

The protein localises to the cell membrane. The catalysed reaction is heme b + (2E,6E)-farnesyl diphosphate + H2O = Fe(II)-heme o + diphosphate. It functions in the pathway porphyrin-containing compound metabolism; heme O biosynthesis; heme O from protoheme: step 1/1. In terms of biological role, converts heme B (protoheme IX) to heme O by substitution of the vinyl group on carbon 2 of heme B porphyrin ring with a hydroxyethyl farnesyl side group. The polypeptide is Protoheme IX farnesyltransferase (Thermoplasma acidophilum (strain ATCC 25905 / DSM 1728 / JCM 9062 / NBRC 15155 / AMRC-C165)).